A 220-amino-acid polypeptide reads, in one-letter code: Flagellin A2 (220 aa).

A propeptide spanning residues 1–11 (MFNNITDDDRG) is cleaved from the precursor. N-linked (GlcNAc...) asparagine glycans are attached at residues asparagine 78, asparagine 95, asparagine 112, and asparagine 124.

Belongs to the archaeal flagellin family. Post-translationally, glycosylated by a pentasaccharide similar to the S-layer glycoprotein, probably comprising a hexose, 2 hexuronic acids, a methyl ester of a hexuronic acid and mannose.

Its subcellular location is the archaeal flagellum. Functionally, flagellin that plays both structural and regulatory roles in flagella biosynthesis. Does not constitute a major flagellin in terms of abundance contrary to FlgA1: may regulate the flagella-dependent swimming motility depending on the relative abundance of FlgA1. Not involved in PibD-dependent surface adhesion. This is Flagellin A2 (flgA2) from Haloferax volcanii (strain ATCC 29605 / DSM 3757 / JCM 8879 / NBRC 14742 / NCIMB 2012 / VKM B-1768 / DS2) (Halobacterium volcanii).